The chain runs to 354 residues: Uroporphyrinogen decarboxylase (354 aa).

Substrate-binding positions include 27 to 31 (RQAGR), Asp77, Tyr154, Thr209, and His327.

This sequence belongs to the uroporphyrinogen decarboxylase family. Homodimer.

The protein resides in the cytoplasm. The catalysed reaction is uroporphyrinogen III + 4 H(+) = coproporphyrinogen III + 4 CO2. It functions in the pathway porphyrin-containing compound metabolism; protoporphyrin-IX biosynthesis; coproporphyrinogen-III from 5-aminolevulinate: step 4/4. Catalyzes the decarboxylation of four acetate groups of uroporphyrinogen-III to yield coproporphyrinogen-III. The polypeptide is Uroporphyrinogen decarboxylase (Histophilus somni (strain 129Pt) (Haemophilus somnus)).